Consider the following 913-residue polypeptide: Eukaryotic translation initiation factor 3 subunit C (913 aa).

The interval 1–22 (MSRFFANGSDSESESSEEEVQA) is disordered. Acidic residues predominate over residues 11–20 (SESESSEEEV). Phosphoserine occurs at positions 34, 165, 177, and 186. Positions 157-285 (FREAPDQESD…KRAEDDEDGE (129 aa)) are disordered. Acidic residues predominate over residues 162-171 (DQESDVEEGE). Over residues 172-184 (GEPHDSDGDRAGA) the composition is skewed to basic and acidic residues. The segment covering 214–239 (DEDDSDDSIDWDSDTESETESSEDEN) has biased composition (acidic residues). The segment covering 244–263 (MRERFLKRTTEKEDKDDDKR) has biased composition (basic and acidic residues). Basic residues predominate over residues 264–276 (KDKRKEQKHKVRK). One can recognise a PCI domain in the interval 645–821 (FHMHINLELL…ETVVMHRSEP (177 aa)). A disordered region spans residues 856 to 913 (RGNMGNRDRGYNRNQNNQGGNWGGQRRDNRNQRNRNQRGHHKQQQQQQQQQVQTIEEE). The segment covering 887-898 (QRNRNQRGHHKQ) has biased composition (basic residues).

This sequence belongs to the eIF-3 subunit C family. As to quaternary structure, component of the eukaryotic translation initiation factor 3 (eIF-3) complex. The eIF-3 complex interacts with pix.

Its subcellular location is the cytoplasm. Functionally, component of the eukaryotic translation initiation factor 3 (eIF-3) complex, which is involved in protein synthesis of a specialized repertoire of mRNAs and, together with other initiation factors, stimulates binding of mRNA and methionyl-tRNAi to the 40S ribosome. The eIF-3 complex specifically targets and initiates translation of a subset of mRNAs involved in cell proliferation. This Drosophila mojavensis (Fruit fly) protein is Eukaryotic translation initiation factor 3 subunit C.